We begin with the raw amino-acid sequence, 3567 residues long: Zinc finger homeobox protein 4 (3567 aa).

Residue methionine 1 is modified to N-acetylmethionine. Disordered regions lie at residues 1 to 54 (METC…LKTD), 425 to 480 (LSHS…AYSN), 522 to 545 (TSSS…VRAS), and 565 to 611 (SKDS…SPGS). A compositionally biased stretch (polar residues) spans 9–28 (ISRQENGQSTSKLCGTTQLD). 2 stretches are compositionally biased toward basic and acidic residues: residues 39 to 54 (EPDR…LKTD) and 434 to 452 (KMSE…KESN). Residues 468-480 (EPGDEDEEDAYSN) show a composition bias toward acidic residues. 3 C2H2-type zinc fingers span residues 613–636 (IECP…TMMH), 644–667 (LKCP…KEKH), and 699–723 (FRCE…SDKH). Residues 767–789 (WRCEVCDYETNVARNLRIHMTSE) form a C2H2-type 4; degenerate zinc finger. C2H2-type zinc fingers lie at residues 917–941 (YQCK…TDKH), 973–995 (LKCN…TTNH), and 1021–1045 (YYCA…SVKH). Positions 1098–1160 (EQHEEAEGAI…EDVATKRSKP (63 aa)) are disordered. Composition is skewed to basic and acidic residues over residues 1120–1132 (TSER…KNSN) and 1148–1160 (AKEE…RSKP). A Glycyl lysine isopeptide (Lys-Gly) (interchain with G-Cter in SUMO2) cross-link involves residue lysine 1149. C2H2-type zinc fingers lie at residues 1172 to 1195 (YQCP…LSQH) and 1201 to 1224 (ICCP…THLH). A disordered region spans residues 1254 to 1324 (AASEKSERDT…WNKNSSKDVK (71 aa)). A compositionally biased stretch (basic and acidic residues) spans 1281-1310 (MDDKSMAGLEDSKANVEVKNEEQKPTKEPL). Residues lysine 1299 and lysine 1324 each participate in a glycyl lysine isopeptide (Lys-Gly) (interchain with G-Cter in SUMO2) cross-link. 2 consecutive C2H2-type zinc fingers follow at residues 1352 to 1374 (YRCN…SQYH) and 1380 to 1403 (TMCN…EAGH). The tract at residues 1429 to 1480 (ETMSQDDHGLEQEMEREYEVDHEGKASPVGSDSSSIPDDMGSEPKRTLPFRK) is disordered. Positions 1433-1453 (QDDHGLEQEMEREYEVDHEGK) are enriched in basic and acidic residues. Residues 1496 to 1522 (YKCTVCKESFTQKNILLVHYNSVSHLH) form a C2H2-type 12 zinc finger. Lysine 1546 participates in a covalent cross-link: Glycyl lysine isopeptide (Lys-Gly) (interchain with G-Cter in SUMO2). Residues 1548–1572 (YKCSICNVAYSQSSTLEIHMRSVLH) form a C2H2-type 13 zinc finger. Composition is skewed to low complexity over residues 1761–1772 (TQPQLQPQKQQQ) and 1779–1791 (QQQQ…LLKQ). 2 disordered regions span residues 1761–1791 (TQPQ…LLKQ) and 1809–1858 (SYKE…IASG). Lysine 1790 participates in a covalent cross-link: Glycyl lysine isopeptide (Lys-Gly) (interchain with G-Cter in SUMO2). The span at 1809–1845 (SYKEAEDISEKPEKPKQEFISEGEGLKEGKDTKKQKS) shows a compositional bias: basic and acidic residues. A C2H2-type 14 zinc finger spans residues 1901 to 1924 (LECGTCGKLFSNVLILKSHQEHVH). Residues 1948–2024 (YPISPSSPET…PPSAPPQVQL (77 aa)) are disordered. Pro residues-rich tracts occupy residues 1955 to 1974 (PETP…PPQP) and 1991 to 2019 (QAPP…PSAP). 2 consecutive DNA-binding regions (homeobox) follow at residues 2084 to 2143 (FKRP…RQRN) and 2181 to 2240 (KRSS…RKSY). Residues 2267–2291 (YQCKKCNVVFPRIFDLITHQKKQCY) form a C2H2-type 15; degenerate zinc finger. Disordered stretches follow at residues 2289–2311 (QCYK…MDAT) and 2328–2431 (AKNA…SPLQ). A compositionally biased stretch (acidic residues) spans 2293–2309 (DEDDDAQDESQTEDSMD). Residues 2331–2345 (AAAPAASSGSGTSTP) show a composition bias toward low complexity. A compositionally biased stretch (basic and acidic residues) spans 2352–2370 (PEPEKTSPKPEYPAEKPKQ). The segment covering 2419–2431 (SASQTPVPSSPLQ) has biased composition (polar residues). Residues 2448–2470 (YQCDQCTVAFPTLELWQEHQHMH) form a C2H2-type 16 zinc finger. Positions 2507–2530 (LGSSLTQMPPQASSSHTTAPTTVA) are enriched in polar residues. Residues 2507-2564 (LGSSLTQMPPQASSSHTTAPTTVAASLKRKLDDKEDNNCSEKEGGNSGEDQHRDKRLR) are disordered. The span at 2535 to 2559 (RKLDDKEDNNCSEKEGGNSGEDQHR) shows a compositional bias: basic and acidic residues. A DNA-binding region (homeobox 3) is located at residues 2560-2619 (DKRLRTTITPEQLEILYEKYLLDSNPTRKMLDHIAREVGLKKRVVQVWFQNTRARERKGQ). A C2H2-type 17 zinc finger spans residues 2630–2653 (KRCPFCRALFKAKSALESHIRSRH). Serine 2663 carries the post-translational modification Phosphoserine. Over residues 2764–2785 (AISDATTGDEGNTEMESTTGSS) the composition is skewed to polar residues. Disordered stretches follow at residues 2764-2811 (AISD…TTPT) and 2829-2885 (HFND…PGHK). The span at 2830 to 2839 (FNDKDGDHDQ) shows a compositional bias: basic and acidic residues. The segment covering 2862-2874 (PSSPNPFGSSNPF) has biased composition (low complexity). Positions 2884–2943 (HKRFRTQMSNLQLKVLKACFSDYRTPTMQECEMLGNEIGLPKRVVQVWFQNARAKEKKFK) form a DNA-binding region, homeobox 4. The C2H2-type 18 zinc finger occupies 2962-2986 (PECTLCGVKYSARLSIRDHIFSKQH). The span at 3092–3110 (SATSSPALSLSSAPTKPLL) shows a compositional bias: low complexity. Disordered stretches follow at residues 3092–3172 (SATS…KEEK) and 3281–3337 (LQKQ…LESK). Residues 3111-3125 (QTPPPPPPPPPPPPS) show a composition bias toward pro residues. Residues 3126–3135 (SSLSGQQTEQ) show a composition bias toward polar residues. A compositionally biased stretch (basic and acidic residues) spans 3153-3172 (IKEEELEATKPEKHPKKEEK). Lysine 3154 participates in a covalent cross-link: Glycyl lysine isopeptide (Lys-Gly) (interchain with G-Cter in SUMO2). Positions 3265-3294 (ALLQQYQQYQQNLQESLQKQQKQQQEQQQK) form a coiled coil. The span at 3281-3293 (LQKQQKQQQEQQQ) shows a compositional bias: low complexity. Residues 3294-3314 (KPVQAKTSKVESDQPQNSNDA) are compositionally biased toward polar residues. A compositionally biased stretch (basic and acidic residues) spans 3315-3337 (SETKEDKSTATESTKEEPQLESK). The C2H2-type 19; degenerate zinc-finger motif lies at 3354-3378 (FICRKCQMMFTDEDAAVNHQKSFCY). The segment at 3398 to 3422 (YQCLACDVAISGNEALSQHLQSSLH) adopts a C2H2-type 20 zinc-finger fold. 2 disordered regions span residues 3443-3462 (HSVC…AASS) and 3511-3534 (STSG…ELSQ). Positions 3447–3462 (SPNPNTTSTSQSAASS) are enriched in low complexity.

Belongs to the krueppel C2H2-type zinc-finger protein family. Expressed in brain, skeletal muscle and liver. Very low expression in stomach.

The protein localises to the nucleus. Functionally, may play a role in neural and muscle differentiation. May be involved in transcriptional regulation. This is Zinc finger homeobox protein 4 (ZFHX4) from Homo sapiens (Human).